A 174-amino-acid chain; its full sequence is Disulfide bond formation protein B (174 aa).

Residues 1 to 14 (MLNFLNICSKTRKS) are Cytoplasmic-facing. Residues 15-31 (WVLLIFTVVILELIALY) form a helical membrane-spanning segment. The Periplasmic segment spans residues 32-49 (LQHIVLIKPCVLCVYQRC). Residues C41 and C44 are joined by a disulfide bond. The helical transmembrane segment at 50–65 (ALCGIGIAGLIGTIAP) threads the bilayer. Over 66–71 (FTPLRF) the chain is Cytoplasmic. The chain crosses the membrane as a helical span at residues 72–89 (FSIPIWIYSAWKGLLLAK). Topologically, residues 90–144 (EYTDIQLHPSPFFMCDLFVQFPHWLPLNKWWPSMFDADGDCAEYKWYFLSLEISQ) are periplasmic. A disulfide bond links C104 and C130. A helical membrane pass occupies residues 145–163 (WMLIIFANYLIIAILVSLS). Residues 164–174 (QIIDLKKWNNK) lie on the Cytoplasmic side of the membrane.

The protein belongs to the DsbB family.

Its subcellular location is the cell inner membrane. Functionally, required for disulfide bond formation in some periplasmic proteins. Acts by oxidizing the DsbA protein. This Blochmanniella pennsylvanica (strain BPEN) protein is Disulfide bond formation protein B.